Here is a 34-residue protein sequence, read N- to C-terminus: Putative protein YmiB (34 aa).

A helical transmembrane segment spans residues 7–24 (TAAKRIVFFIYLFVIQFW).

The protein resides in the membrane. The chain is Putative protein YmiB (ymiB) from Escherichia coli (strain K12).